Reading from the N-terminus, the 137-residue chain is Nucleoside diphosphate kinase (137 aa).

The ATP site is built by lysine 11, phenylalanine 59, arginine 87, threonine 93, arginine 104, and asparagine 114. Catalysis depends on histidine 117, which acts as the Pros-phosphohistidine intermediate.

This sequence belongs to the NDK family. As to quaternary structure, homotetramer. Requires Mg(2+) as cofactor.

Its subcellular location is the cytoplasm. It catalyses the reaction a 2'-deoxyribonucleoside 5'-diphosphate + ATP = a 2'-deoxyribonucleoside 5'-triphosphate + ADP. It carries out the reaction a ribonucleoside 5'-diphosphate + ATP = a ribonucleoside 5'-triphosphate + ADP. Functionally, major role in the synthesis of nucleoside triphosphates other than ATP. The ATP gamma phosphate is transferred to the NDP beta phosphate via a ping-pong mechanism, using a phosphorylated active-site intermediate. This chain is Nucleoside diphosphate kinase, found in Frankia alni (strain DSM 45986 / CECT 9034 / ACN14a).